The following is a 764-amino-acid chain: Palmitoyltransferase AKR1 (764 aa).

Disordered stretches follow at residues 1-38 (MVNE…GDSN) and 51-71 (SGNE…AEED). At 1–321 (MVNELENVPR…IKKWFKKSQH (321 aa)) the chain is on the cytoplasmic side. A compositionally biased stretch (polar residues) spans 10–27 (RASTLTNEEQTVDPSNND). S51 and S57 each carry phosphoserine. 6 ANK repeats span residues 72 to 102 (PLLT…EVNN), 108 to 137 (EHIT…DVNA), 142 to 171 (LHAT…DPTM), 175 to 204 (QGFN…SKGL), 213 to 242 (KGRT…SIKI), and 246 to 275 (EGFT…DFFQ). Residues 322 to 341 (AKLVTFITPFLFLGIAFALF) traverse the membrane as a helical segment. Topologically, residues 342 to 346 (SHINP) are lumenal. A helical transmembrane segment spans residues 347–364 (LFVIIVLFLLAIATNKGL). Over 365-384 (NKFVLPSYGRMGVHNVTLLR) the chain is Cytoplasmic. Residues 385–405 (SPLLSGVFFGTLLWVTIVWFF) traverse the membrane as a helical segment. Residues 406-418 (KVMPRTFSDEQYT) lie on the Lumenal side of the membrane. Residues 419 to 439 (NILMLVILVSVFYLFGQLVIM) traverse the membrane as a helical segment. Topologically, residues 440–513 (DPGCLPEETD…FNDVGLKNHK (74 aa)) are cytoplasmic. One can recognise a DHHC domain in the interval 470–520 (NFCIETWIRKPLRSKFSPLNNAVVARFDHYCPWIFNDVGLKNHKAFIFFIT). C500 serves as the catalytic S-palmitoyl cysteine intermediate. A helical membrane pass occupies residues 514 to 534 (AFIFFITLMESGIFTFLALCL). Topologically, residues 535–570 (EYFDELEDAHEDTSQKNGKCFILGASDLCSGLIYDR) are lumenal. The chain crosses the membrane as a helical span at residues 571–591 (FVFLILLWALLQSIWVASLIF). The Cytoplasmic segment spans residues 592-764 (VQAFQICKGM…KDVEQGNDMV (173 aa)).

It belongs to the DHHC palmitoyltransferase family. AKR/ZDHHC17 subfamily.

Its subcellular location is the early endosome membrane. It is found in the golgi apparatus membrane. The catalysed reaction is L-cysteinyl-[protein] + hexadecanoyl-CoA = S-hexadecanoyl-L-cysteinyl-[protein] + CoA. In terms of biological role, palmitoyltransferase specific for casein kinase 1. Palmitoylates isoforms YCK1 and YCK2 at both C-terminal cysteine residues, which is required for their proper plasma membrane localization. Required for constitutive endocytosis of a-factor receptor STE3 and both constitutive and pheromone-induced endocytosis of alpha-factor receptor STE2. This is Palmitoyltransferase AKR1 (AKR1) from Saccharomyces cerevisiae (strain ATCC 204508 / S288c) (Baker's yeast).